A 272-amino-acid chain; its full sequence is D-aminoacyl-tRNA deacylase (272 aa).

Monomer. It depends on Zn(2+) as a cofactor.

It carries out the reaction a D-aminoacyl-tRNA + H2O = a tRNA + a D-alpha-amino acid + H(+). It catalyses the reaction glycyl-tRNA(Ala) + H2O = tRNA(Ala) + glycine + H(+). The catalysed reaction is D-tyrosyl-tRNA(Tyr) + H2O = D-tyrosine + tRNA(Tyr). Its function is as follows. D-aminoacyl-tRNA deacylase with broad substrate specificity. By recycling D-aminoacyl-tRNA to D-amino acids and free tRNA molecules, this enzyme counteracts the toxicity associated with the formation of D-aminoacyl-tRNA entities in vivo. Catalyzes the hydrolysis of D-tyrosyl-tRNA(Tyr) and D-aspartyl-tRNA(Asp). The protein is D-aminoacyl-tRNA deacylase of Pyrococcus abyssi (strain GE5 / Orsay).